We begin with the raw amino-acid sequence, 759 residues long: Probable Na(+)/H(+) antiporter C3A11.09 (759 aa).

11 helical membrane passes run 12–32 (HLAY…SLII), 36–56 (LFLG…PYVA), 105–125 (MLLP…YALI), 133–153 (SLAI…SIVG), 172–192 (ESGC…YLII), 206–226 (IIIL…GVIA), 244–264 (FLVF…IIGV), 295–315 (VIDL…MPWP), 319–339 (MPHM…ILIA), 361–381 (ALFA…CLVA), and 415–435 (VVCF…AFFM). Threonine 442 is modified (phosphothreonine). Serine 446 bears the Phosphoserine mark. Threonine 448 is modified (phosphothreonine). Basic and acidic residues-rich tracts occupy residues 514 to 529 (LREE…HYDA), 537 to 547 (YESRQPRRSNE), 590 to 601 (IDEKLAQGDPKA), 622 to 647 (NLHE…ENHR), and 655 to 671 (SESH…RREQ). Disordered stretches follow at residues 514–558 (LREE…NPGD), 578–606 (SHTS…SFGR), and 622–759 (NLHE…RAWE). Residues 696–713 (NENNESSSDTRNGLLSDN) are compositionally biased toward polar residues. 2 N-linked (GlcNAc...) asparagine glycosylation sites follow: asparagine 699 and asparagine 713. The segment covering 724 to 733 (RAPSAAVSSE) has biased composition (low complexity). Serine 735 carries the post-translational modification Phosphoserine.

Belongs to the fungal Na(+)/H(+) exchanger family.

Its subcellular location is the membrane. Functionally, sodium export from cell, takes up external protons in exchange for internal sodium ions. The polypeptide is Probable Na(+)/H(+) antiporter C3A11.09 (sod22) (Schizosaccharomyces pombe (strain 972 / ATCC 24843) (Fission yeast)).